Here is a 500-residue protein sequence, read N- to C-terminus: Pentatricopeptide repeat-containing protein At1g05750, chloroplastic (500 aa).

Residues 1–54 constitute a chloroplast transit peptide; that stretch reads MGLLPVVGITSPALITHKNHANPKIQRHNQSTSETTVSWTSRINLLTRNGRLAE. PPR repeat units follow at residues 35-69, 70-106, 108-138, 139-173, 174-204, 205-239, 240-270, 271-305, 306-336, and 342-376; these read TTVS…GVEP, NHIT…GLDR, HVMV…MEDK, NSVT…DLIS, WTAM…GVKP, DYVA…DFKN, NVRV…MEKR, TVVS…GFKP, DAVT…MKCD, and RIEH…PNEV. Residues 377–453 are type E motif; that stretch reads VIGSLLAACS…QPGFSSIEID (77 aa). The tract at residues 454–484 is type E(+) motif; sequence DCMHVFMAGDNAHVETTYIREVLELISSDLR.

It belongs to the PPR family. PCMP-E subfamily.

Its subcellular location is the plastid. It is found in the chloroplast. This Arabidopsis thaliana (Mouse-ear cress) protein is Pentatricopeptide repeat-containing protein At1g05750, chloroplastic (PDE247).